A 447-amino-acid polypeptide reads, in one-letter code: Argininosuccinate synthase (447 aa).

Residues 20–28 (AFSGGLDTS) and Ala-46 each bind ATP. Position 102 (Tyr-102) interacts with L-citrulline. The ATP site is built by Gly-132 and Thr-134. 3 residues coordinate L-aspartate: Thr-134, Asn-138, and Asp-139. Asn-138 lines the L-citrulline pocket. Position 139 (Asp-139) interacts with ATP. 2 residues coordinate L-citrulline: Arg-142 and Ser-195. Asp-197 is an ATP binding site. Residues Thr-204, Glu-206, and Glu-283 each contribute to the L-citrulline site.

It belongs to the argininosuccinate synthase family. Type 2 subfamily. Homotetramer.

It localises to the cytoplasm. The catalysed reaction is L-citrulline + L-aspartate + ATP = 2-(N(omega)-L-arginino)succinate + AMP + diphosphate + H(+). It participates in amino-acid biosynthesis; L-arginine biosynthesis; L-arginine from L-ornithine and carbamoyl phosphate: step 2/3. The polypeptide is Argininosuccinate synthase (argG) (Neisseria meningitidis serogroup A / serotype 4A (strain DSM 15465 / Z2491)).